A 65-amino-acid polypeptide reads, in one-letter code: Large ribosomal subunit protein bL32 (65 aa).

It belongs to the bacterial ribosomal protein bL32 family.

In Rickettsia prowazekii (strain Madrid E), this protein is Large ribosomal subunit protein bL32 (rpmF).